The sequence spans 563 residues: F-box/kelch-repeat protein At5g42360 (563 aa).

The F-box domain occupies 129–175 (YRKHVYLPDDILEMCLMRLPLTSLLNAHLVCKKWQSMANTQRFLQMR). Kelch repeat units follow at residues 184-231 (WLFL…SIHE), 232-282 (EIYI…ATEV), and 355-402 (VLIA…IICN).

This chain is F-box/kelch-repeat protein At5g42360, found in Arabidopsis thaliana (Mouse-ear cress).